Consider the following 285-residue polypeptide: Prephenate dehydratase (285 aa).

In terms of domain architecture, Prephenate dehydratase spans 2–183 (KVGYLGPAAT…NHTRFVILSP (182 aa)). Residues 204 to 281 (MVMLPQDDQS…CKVRLLGAYQ (78 aa)) enclose the ACT domain.

It catalyses the reaction prephenate + H(+) = 3-phenylpyruvate + CO2 + H2O. It functions in the pathway amino-acid biosynthesis; L-phenylalanine biosynthesis; phenylpyruvate from prephenate: step 1/1. This chain is Prephenate dehydratase (pheA), found in Bacillus subtilis (strain 168).